Here is a 1480-residue protein sequence, read N- to C-terminus: Cystic fibrosis transmembrane conductance regulator (1480 aa).

The Cytoplasmic portion of the chain corresponds to 1–77 (MQRSPLEKAS…KLINALRRCF (77 aa)). Residues 78–98 (FWRFMFYGIFLYLGEVTKAVQ) form a helical membrane-spanning segment. Residues 81–365 (FMFYGIFLYL…WAVQTWYDSL (285 aa)) enclose the ABC transmembrane type-1 1 domain. Residues 99 to 122 (PLLLGRIIASYDPDNKEERSIAIY) are Extracellular-facing. A helical membrane pass occupies residues 123–146 (LGIGLCLLFIVRTLLLHPAIFGLH). The Cytoplasmic segment spans residues 147–195 (HIGMQMRIAMFSLIYKKTLKLSSRVLDKISIGQLVSLLSNNLNKFDEGL). Residues 196–216 (ALAHFVWIAPLQVALLMGLIW) traverse the membrane as a helical segment. Residues 217–222 (ELLQAS) are Extracellular-facing. A helical membrane pass occupies residues 223-243 (AFCGLGFLIVLALFQAGLGRM). The Cytoplasmic segment spans residues 244–298 (MMKYRDQRAGKINERLVITSEMIENIQSVKAYCWEEAMEKMIENLRQTELKLTRK). The helical transmembrane segment at 299–319 (AAYVRYFNSSAFFFSGFFVVF) threads the bilayer. Topologically, residues 320-339 (LSVLPYALIKGIVLRKIFTT) are extracellular. Residues 340–358 (ISFCIVLRMAVTRQFPWAV) form a helical membrane-spanning segment. Over 359 to 858 (QTWYDSLGAI…YLRYITVHKS (500 aa)) the chain is Cytoplasmic. ATP contacts are provided by residues tryptophan 401, serine 434, 458-465 (GSTGAGKT), and glutamine 493. The ABC transporter 1 domain maps to 423-646 (NGDDSLFFSN…RPDFSSKLMG (224 aa)). Cysteine 524 carries S-palmitoyl cysteine lipidation. Serine 549 and serine 660 each carry phosphoserine. Residues 654–831 (SAERRNSILT…EEINEEDLKE (178 aa)) are disordered R region. At serine 670 the chain carries Phosphoserine; by PKA. Residue lysine 688 forms a Glycyl lysine isopeptide (Lys-Gly) (interchain with G-Cter in ubiquitin) linkage. Residues serine 700 and serine 712 each carry the phosphoserine modification. Threonine 717 carries the phosphothreonine modification. 6 positions are modified to phosphoserine: serine 737, serine 753, serine 768, serine 790, serine 795, and serine 813. The chain crosses the membrane as a helical span at residues 859–879 (LIFVLIWCLVIFLAEVAASLV). An ABC transmembrane type-1 2 domain is found at 859–1155 (LIFVLIWCLV…AVNSSIDVDS (297 aa)). Over 880–918 (VLWLLGNTPLQDKGNSTHSRNNSYAVIITSTSSYYVFYI) the chain is Extracellular. 2 N-linked (GlcNAc...) asparagine glycosylation sites follow: asparagine 894 and asparagine 900. The chain crosses the membrane as a discontinuously helical span at residues 919–939 (YVGVADTLLAMGFFRGLPLVH). Topologically, residues 940–990 (TLITVSKILHNKMLHSVLQAPMSTLNTLKAGGILNRFSKDIAILDDLLPLT) are cytoplasmic. A helical transmembrane segment spans residues 991 to 1011 (IFDFIQLLLIVIGAIAVVAVL). Residues 1012–1013 (QP) are Extracellular-facing. Residues 1014 to 1034 (YIFVATVPVIVAFIMLRAYFL) form a helical membrane-spanning segment. Topologically, residues 1035 to 1095 (QTSQQLKQLE…TANWFLYLST (61 aa)) are cytoplasmic. Residues 1096–1116 (LRWFQMRIEMIFVIFFIAVTF) form a helical membrane-spanning segment. The Extracellular segment spans residues 1117–1130 (ISILTTGEGEGRVG). The helical transmembrane segment at 1131-1151 (IILTLAMNIMSTLQWAVNSSI) threads the bilayer. Topologically, residues 1152–1480 (DVDSLMRSVS…TEEEVQDTRL (329 aa)) are cytoplasmic. In terms of domain architecture, ABC transporter 2 spans 1210–1443 (MTVKDLTAKY…RSLFQQAISP (234 aa)). ATP-binding positions include tyrosine 1219 and 1244 to 1251 (GRTGSGKS). The tract at residues 1386–1480 (RTLKQAFADC…TEEEVQDTRL (95 aa)) is interaction with GORASP2. Cysteine 1395 carries the S-palmitoyl cysteine lipid modification. Serine 1444 and serine 1456 each carry phosphoserine. The tract at residues 1452–1480 (HRNSSKCKSKPQIAALKEETEEEVQDTRL) is disordered. A compositionally biased stretch (acidic residues) spans 1470–1480 (ETEEEVQDTRL). The PDZ-binding motif lies at 1478–1480 (TRL).

This sequence belongs to the ABC transporter superfamily. ABCC family. CFTR transporter (TC 3.A.1.202) subfamily. In terms of assembly, monomer; does not require oligomerization for channel activity. May form oligomers in the membrane. Interacts with SLC26A3, SLC26A6 and NHERF1. Interacts with SHANK2. Interacts with MYO6. Interacts (via C-terminus) with GOPC (via PDZ domain); this promotes CFTR internalization and thereby decreases channel activity. Interacts with SLC4A7 through NHERF1. Found in a complex with MYO5B and RAB11A. Interacts with ANO1. Interacts with SLC26A8. Interacts with AHCYL1; the interaction increases CFTR activity. Interacts with CSE1L. The core-glycosylated form interacts with GORASP2 (via PDZ GRASP-type 1 domain) in respone to ER stress. Interacts with MARCHF2; the interaction leads to CFTR ubiqtuitination and degradation. Interacts with ADGRG2. Post-translationally, N-glycosylated. Phosphorylated; cAMP treatment promotes phosphorylation and activates the channel. Dephosphorylation decreases the ATPase activity (in vitro). Phosphorylation at PKA sites activates the channel. Phosphorylation at PKC sites enhances the response to phosphorylation by PKA. Phosphorylated by AMPK; this inhibits channel activity. In terms of processing, ubiquitinated, leading to its degradation in the lysosome. Deubiquitination by USP10 in early endosomes enhances its endocytic recycling to the cell membrane. Ubiquitinated by RNF185 during ER stress. Ubiquitinated by MARCHF2.

It is found in the apical cell membrane. Its subcellular location is the early endosome membrane. The protein localises to the cell membrane. It localises to the recycling endosome membrane. The protein resides in the endoplasmic reticulum membrane. It is found in the nucleus. It catalyses the reaction ATP + H2O + closed Cl(-) channel = ADP + phosphate + open Cl(-) channel.. It carries out the reaction chloride(in) = chloride(out). The catalysed reaction is hydrogencarbonate(in) = hydrogencarbonate(out). The enzyme catalyses ATP + H2O = ADP + phosphate + H(+). Functionally, epithelial ion channel that plays an important role in the regulation of epithelial ion and water transport and fluid homeostasis. Mediates the transport of chloride ions across the cell membrane. Possesses an intrinsic ATPase activity and utilizes ATP to gate its channel; the passive flow of anions through the channel is gated by cycles of ATP binding and hydrolysis by the ATP-binding domains. The ion channel is also permeable to HCO(3)(-); selectivity depends on the extracellular chloride concentration. Exerts its function also by modulating the activity of other ion channels and transporters. Contributes to the regulation of the pH and the ion content of the epithelial fluid layer. Modulates the activity of the epithelial sodium channel (ENaC) complex, in part by regulating the cell surface expression of the ENaC complex. May regulate bicarbonate secretion and salvage in epithelial cells by regulating the transporter SLC4A7. Can inhibit the chloride channel activity of ANO1. Plays a role in the chloride and bicarbonate homeostasis during sperm epididymal maturation and capacitation. This is Cystic fibrosis transmembrane conductance regulator from Pongo abelii (Sumatran orangutan).